The primary structure comprises 2326 residues: Probable voltage-dependent N-type calcium channel subunit alpha-1B (2326 aa).

Residues 1–83 are Cytoplasmic-facing; that stretch reads MARLGNDVPA…DNIIRKYAKR (83 aa). The segment at 17-37 is disordered; it reads AGGGRGANRHAGPQAGQRGMY. The I repeat unit spans residues 75–351; that stretch reads NIIRKYAKRI…LVLGVLSGEF (277 aa). A helical membrane pass occupies residues 84–107; that stretch reads ITEWPPFEYMILATIIANCIVLAL. Topologically, residues 108–124 are extracellular; that stretch reads EQHLPDGDKTPMSERLD. The chain crosses the membrane as a helical span at residues 125-145; that stretch reads DTEPYFIGIFCFEAGIKIIAL. The Cytoplasmic portion of the chain corresponds to 146–156; the sequence is GFAFHKGSYLR. Residues 157-175 form a helical membrane-spanning segment; the sequence is NGWNVMDFVVVLTGILTTI. Over 176-180 the chain is Extracellular; the sequence is GTDFD. Residues 181 to 204 form a helical membrane-spanning segment; sequence LRTLRAVRVLRPLKLVSGIPSLQV. The Cytoplasmic portion of the chain corresponds to 205–214; that stretch reads VLKSIMKAMV. Residues 215-237 form a helical membrane-spanning segment; it reads PLLQIGLLLFFAILMFAIIGLEF. Residues 238-323 lie on the Extracellular side of the membrane; the sequence is YMGKFHKTCF…TANDALGNTW (86 aa). The N-linked (GlcNAc...) asparagine glycan is linked to Asn271. The helical transmembrane segment at 324-348 threads the bilayer; it reads NWLYFIPLIVIGSFFMLNLVLGVLS. Residues 349–472 lie on the Cytoplasmic side of the membrane; sequence GEFAKERERV…FFIRRMVKSQ (124 aa). The interval 371-388 is binding to the beta subunit; that stretch reads QQVEQEFNRYLRWIHIAE. One copy of the II repeat lies at 458-702; sequence EKRFRFFIRR…VFLAIAVDNL (245 aa). A helical membrane pass occupies residues 473–491; sequence SFYWIVLCLVGLNTLCVAI. Over 492-501 the chain is Extracellular; sequence VHYDQPPLLT. The helical transmembrane segment at 502-524 threads the bilayer; it reads DALYFAEFVFLGLFLTEMSLKMY. The Cytoplasmic segment spans residues 525–534; that stretch reads GLGPRNYFHS. Ser534 serves as a coordination point for a 1,2-diacyl-sn-glycero-3-phospho-(1D-myo-inositol-4,5-bisphosphate). The helical transmembrane segment at 535 to 556 threads the bilayer; sequence SFNCFDFGVIVGSIFEVVWTAV. The Extracellular portion of the chain corresponds to 557–563; the sequence is KPDTSFG. The helical transmembrane segment at 564–576 threads the bilayer; it reads ISVLRALRLLRIF. Residues Arg574 and Lys577 each contribute to the a 1,2-diacyl-sn-glycero-3-phospho-(1D-myo-inositol-4,5-bisphosphate) site. The Cytoplasmic portion of the chain corresponds to 577 to 594; that stretch reads KVTKYWNSLRNLVVSLLN. A helical transmembrane segment spans residues 595–620; the sequence is SMKSIISLLFLLFLFIVVFALLGMQL. Topologically, residues 621 to 672 are extracellular; that stretch reads FGGQFNFEDGTPPTNFDTFPAAILTVFQILTGEDWNEVMYYGIEAHGGVKKG. A helical transmembrane segment spans residues 673 to 699; that stretch reads MFSSVYFIILTLFGNYTLLNVFLAIAV. Topologically, residues 700-1148 are cytoplasmic; that stretch reads DNLANAQELT…ACHYIVNLRY (449 aa). The tract at residues 793–1048 is disordered; that stretch reads SHQIRPDMKT…LQHLPQQPED (256 aa). Composition is skewed to basic and acidic residues over residues 796–808, 854–879, 886–908, 935–979, and 994–1011; these read IRPDMKTHLDRPL, KLGEQDKGDGALDTGEPRANSKDDKR, SKETEKERDEKGRKGERSRSHEG, HGTE…EGAE, and SEEKREIGEKERETVLRE. Over residues 1020–1032 the composition is skewed to polar residues; that stretch reads TQPSQDSGTQGNV. The stretch at 1134–1416 is one III repeat; sequence NPVRRACHYI…IFVALIIITF (283 aa). The chain crosses the membrane as a helical span at residues 1149–1167; sequence FEMCILLVITMSSIALAAE. The Extracellular portion of the chain corresponds to 1168 to 1175; it reads DPVQGDAP. The chain crosses the membrane as a helical span at residues 1176–1200; sequence RNNVLKYLDYVFTGVFTFEMVIKMI. The Cytoplasmic portion of the chain corresponds to 1201–1214; it reads NLGLILHPGSYFRD. Residues 1215–1235 form a helical membrane-spanning segment; the sequence is LWNILDFIVVSGALVAFAFTG. Topologically, residues 1236–1241 are extracellular; the sequence is SRGKDL. A helical transmembrane segment spans residues 1242–1262; sequence NTIKSLRVLRVLRPLKTIKRL. Residues 1263 to 1280 are Cytoplasmic-facing; sequence PKLKAVFDCVVNSLKNVL. A helical transmembrane segment spans residues 1281–1300; that stretch reads NILIVYMLFMFIFAVIAVQL. Residues 1301–1387 lie on the Extracellular side of the membrane; it reads FKGKFFYCTD…DQGPSPSYRM (87 aa). The chain crosses the membrane as a helical span at residues 1388–1413; it reads EMSIFYVVYFVVFPFFFVNIFVALII. Residues 1414 to 1468 lie on the Cytoplasmic side of the membrane; sequence ITFQEQGDKVMSDCSLEKNERACIDFAISAKPLTRYMPQNKQTFQYKMWKFVVSP. An IV repeat occupies 1453-1708; sequence NKQTFQYKMW…LFVAVIMDNF (256 aa). Residues 1469–1487 traverse the membrane as a helical segment; sequence PFEYLIMALIALNTIVLMM. Topologically, residues 1488–1495 are extracellular; sequence KFYNAPDP. A helical transmembrane segment spans residues 1496 to 1520; the sequence is YDRMLQYLNILFTFLFSMECVLKLI. The Cytoplasmic segment spans residues 1521–1530; the sequence is GFGVLNYFRD. The chain crosses the membrane as a helical span at residues 1531–1552; the sequence is AWNVFDFVTVLGSITDILVTEL. Topologically, residues 1553–1558 are extracellular; it reads ADSFIN. An N-linked (GlcNAc...) asparagine glycan is attached at Asn1558. A helical transmembrane segment spans residues 1559–1577; it reads LSFLRLFRAARLIKLLRQG. The Cytoplasmic portion of the chain corresponds to 1578–1596; it reads YTIRILLWTFVQSFKALPY. The helical transmembrane segment at 1597–1616 threads the bilayer; sequence VCLLIAMLFFIYAIIGMQVF. At 1617-1680 the chain is on the extracellular side; sequence GNIELDDDGA…IDGDECGSNF (64 aa). Residues 1681–1704 form a helical membrane-spanning segment; it reads AYFYFVSFIFFSSFLMLNLFVAVI. Residues 1705–2326 lie on the Cytoplasmic side of the membrane; sequence MDNFEYLTRD…YRETDEDDWC (622 aa). The EF-hand domain occupies 1721–1756; it reads HHLDEFIRVWAEYDPGARGRITYNDMYEMLRHMCPP. Residues Asp1734, Arg1740, and Asp1745 each contribute to the Ca(2+) site. The span at 1897-1912 shows a compositional bias: polar residues; the sequence is EEPSSYSTSHKNSVNP. 4 disordered regions span residues 1897–1916, 1932–1954, 2039–2242, and 2271–2326; these read EEPSSYSTSHKNSVNPLYQG, CAEGKKEVPESHPEEAGVTKSSS, PHHH…SSDP, and TTAT…DDWC. Over residues 1932–1948 the composition is skewed to basic and acidic residues; it reads CAEGKKEVPESHPEEAG. Residues 2039-2055 show a composition bias toward basic residues; sequence PHHHHHHHRCHHRREKK. Basic and acidic residues-rich tracts occupy residues 2056-2069 and 2077-2104; these read QRSLERATNRHADE and QLRDQSSKERERGRSQERRPPSSAEKQR. 3 stretches are compositionally biased toward polar residues: residues 2142–2161, 2275–2289, and 2302–2311; these read GSGSVNDSPLQSASGSSTPS, GRSPRTSSFTTQPPQ, and GRSTGPSTAA.

This sequence belongs to the calcium channel alpha-1 subunit (TC 1.A.1.11) family. Multisubunit complex consisting of alpha-1, alpha-2, beta and delta subunits in a 1:1:1:1 ratio. The channel activity is directed by the pore-forming and voltage-sensitive alpha-1 subunit. In many cases, this subunit is sufficient to generate voltage-sensitive calcium channel activity. The auxiliary subunits beta and alpha-2/delta linked by a disulfide bridge regulate the channel activity. Post-translationally, phosphorylated in vitro by CaM-kinase II, PKA, PKC and CGPK. In terms of tissue distribution, expression is higher in the electric lobe than in the forebrain.

It is found in the membrane. The isoform alpha-1B gives rise to N-type calcium currents. N-type calcium channels belong to the 'high-voltage activated' (HVA) group. The polypeptide is Probable voltage-dependent N-type calcium channel subunit alpha-1B (Diplobatis ommata (Ocellated electric ray)).